A 335-amino-acid polypeptide reads, in one-letter code: Acetyl-coenzyme A carboxylase carboxyl transferase subunit alpha (335 aa).

The CoA carboxyltransferase C-terminal domain occupies 48–308; the sequence is TLEKKVEALR…KGILIEELSA (261 aa).

It belongs to the AccA family. In terms of assembly, acetyl-CoA carboxylase is a heterohexamer composed of biotin carboxyl carrier protein (AccB), biotin carboxylase (AccC) and two subunits each of ACCase subunit alpha (AccA) and ACCase subunit beta (AccD).

The protein resides in the cytoplasm. It catalyses the reaction N(6)-carboxybiotinyl-L-lysyl-[protein] + acetyl-CoA = N(6)-biotinyl-L-lysyl-[protein] + malonyl-CoA. The protein operates within lipid metabolism; malonyl-CoA biosynthesis; malonyl-CoA from acetyl-CoA: step 1/1. Component of the acetyl coenzyme A carboxylase (ACC) complex. First, biotin carboxylase catalyzes the carboxylation of biotin on its carrier protein (BCCP) and then the CO(2) group is transferred by the carboxyltransferase to acetyl-CoA to form malonyl-CoA. The chain is Acetyl-coenzyme A carboxylase carboxyl transferase subunit alpha from Chlorobium phaeovibrioides (strain DSM 265 / 1930) (Prosthecochloris vibrioformis (strain DSM 265)).